The primary structure comprises 977 residues: Short transient receptor potential channel 4 (977 aa).

The Cytoplasmic segment spans residues 1 to 324 (MAQFYYKRNV…YDEFPGWRRR (324 aa)). ANK repeat units lie at residues 29 to 60 (LSPS…IYFK), 71 to 93 (RTAL…LSFN), 96 to 118 (VGDA…LLNH), and 141 to 165 (PDIT…VQKG). Zn(2+) contacts are provided by His172, Cys176, Cys178, and Cys181. Residues 223–260 (LSWELQELSKVENEFKSEYEELSRQCKQFAKDLLDQTR) adopt a coiled-coil conformation. Positions 325–359 (HWAVKMVTCFIIGLLFPVFSVCYLIAPKSPLGLFI) form an intramembrane region, discontinuously helical. Residues 360-362 (RKP) are Cytoplasmic-facing. The chain crosses the membrane as a helical span at residues 363-383 (FIKFICHTASYLTFLFLLLLA). At 384 to 403 (SQHIDRSDLNRQGPPPTIVE) the chain is on the extracellular side. Residues 404 to 418 (WMILPWVLGFIWGEI) form a helical membrane-spanning segment. Residues Glu417, Gln420, Asn435, and Asp438 each contribute to the Ca(2+) site. At 419-432 (KQMWDGGLQDYIHD) the chain is on the cytoplasmic side. Residues 433–453 (WWNLMDFVMNSLYLATISLKI) form a helical membrane-spanning segment. Topologically, residues 454 to 475 (VAFVKYSALNPRESWDMWHPTL) are extracellular. Residues 476-498 (VAEALFAIANIFSSLRLISLFTA) form a helical membrane-spanning segment. Topologically, residues 499–511 (NSHLGPLQISLGR) are cytoplasmic. The chain crosses the membrane as a helical span at residues 512 to 534 (MLLDILKFLFIYCLVLLAFANGL). Over 535–599 (NQLYFYYEET…HEFTEFVGAT (65 aa)) the chain is Extracellular. A disulfide bond links Cys549 and Cys554. Residues 600–620 (MFGTYNVISLVVLLNMLIAMM) form a helical membrane-spanning segment. The interaction with ITPR1, ITPR2 and ITPR3 stretch occupies residues 615–977 (MLIAMMNNSY…THEDYVTTRL (363 aa)). Over 621-977 (NNSYQLIADH…THEDYVTTRL (357 aa)) the chain is Cytoplasmic. The disordered stretch occupies residues 762-790 (IQSANASKESSNSADSDEKSDSEGNSKDK). The segment covering 764–775 (SANASKESSNSA) has biased composition (low complexity). A compositionally biased stretch (basic and acidic residues) spans 777–788 (SDEKSDSEGNSK). Residues Tyr959 and Tyr972 each carry the phosphotyrosine; by FYN modification. A PDZ-binding domain region spans residues 975–977 (TRL).

Belongs to the transient receptor (TC 1.A.4) family. STrpC subfamily. TRPC4 sub-subfamily. In terms of assembly, homotetramer. Heterotetramer with TRPC1 and/or TRPC5. Forms a heteromeric ion channel with TRPC1, with a 1:3 TRPC1:TRPC4 stoichiometry. Interacts with TRPC4AP. Isoform alpha but not isoform beta interacts with ITPR1, ITPR2 and ITPR3. Interacts with (via PDZ-binding domain) with NHERF1. Interacts with MX1 and RNF24. Interacts (via CIRB domain) with SESTD1 (via spectrin 1 repeat). Interacts with CDH5 and CTNNB1. Interacts with SPTAN1 (via C-terminal spectrin repeats) and SPTBN5 (via C-terminus). Interacts (via protein 4.1-binding domain) with EPB41L2. Interacts with PLSCR1. Phosphorylation modulates TRPC channel function by regulating the level of TRPC4 at the cell surface and by increasing the association with NHERF1. As to expression, strongly expressed in placenta. Expressed at lower levels in heart, pancreas, kidney and brain. Expressed in endothelial cells. Isoform alpha was found to be the predominant isoform. Isoform beta was not found in pancreas and brain.

It is found in the cell membrane. It catalyses the reaction Ca(2+)(in) = Ca(2+)(out). The enzyme catalyses Na(+)(in) = Na(+)(out). The catalysed reaction is Li(+)(in) = Li(+)(out). It carries out the reaction Cs(+)(in) = Cs(+)(out). With respect to regulation, may be operated by a phosphatidylinositol second messenger system activated by receptor tyrosine kinases or G-protein coupled receptors. May be activated by intracellular calcium store depletion. Inhibited by xanthine-based inhibitor Pico145. Its function is as follows. Forms a receptor-activated non-selective calcium permeant cation channel. Acts as a cell-cell contact-dependent endothelial calcium entry channel. Forms a homomeric ion channel or a heteromeric ion channel with TRPC1; the heteromeric ion channel has reduced calcium permeability compared to the homomeric channel. Also permeable to monovalent ions including sodium, lithium and cesium ions. In terms of biological role, forms a receptor-activated non-selective calcium permeant cation channel. This Homo sapiens (Human) protein is Short transient receptor potential channel 4 (TRPC4).